The primary structure comprises 101 residues: Protein Tat (101 aa).

Residues 1-24 are interaction with human CREBBP; the sequence is MEPVDPNLEPWKHPGSQPRTACTN. Residues 1-48 are transactivation; that stretch reads MEPVDPNLEPWKHPGSQPRTACTNCYCKKCCFHCQVCFITKGLGISYG. 3 residues coordinate Zn(2+): Cys-22, Cys-25, and Cys-27. The cysteine-rich stretch occupies residues 22–37; it reads CTNCYCKKCCFHCQVC. Lys-28 bears the N6-acetyllysine; by host PCAF mark. Cys-30, His-33, Cys-34, and Cys-37 together coordinate Zn(2+). The tract at residues 38–48 is core; sequence FITKGLGISYG. The tract at residues 48 to 101 is disordered; it reads GRKKRRQRQRAPDSSQNHQDSLSKQPSSQPRGDPTGPKESKKEVERETETDPLD. A Nuclear localization signal, RNA-binding (TAR), and protein transduction motif is present at residues 49 to 57; that stretch reads RKKRRQRQR. Residues 49–86 are interaction with the host capping enzyme RNGTT; the sequence is RKKRRQRQRAPDSSQNHQDSLSKQPSSQPRGDPTGPKE. An N6-acetyllysine; by host EP300 and GCN5L2 mark is found at Lys-50 and Lys-51. Asymmetric dimethylarginine; by host PRMT6 occurs at positions 52 and 53. A compositionally biased stretch (polar residues) spans 59–77; sequence PDSSQNHQDSLSKQPSSQP. Residue Lys-71 forms a Glycyl lysine isopeptide (Lys-Gly) (interchain with G-Cter in ubiquitin) linkage. Positions 78 to 80 match the Cell attachment site motif; that stretch reads RGD. Basic and acidic residues predominate over residues 83–101; it reads GPKESKKEVERETETDPLD.

It belongs to the lentiviruses Tat family. As to quaternary structure, interacts with host CCNT1. Associates with the P-TEFb complex composed at least of Tat, P-TEFb (CDK9 and CCNT1), TAR RNA, RNA Pol II. Recruits the HATs CREBBP, TAF1/TFIID, EP300, PCAF and GCN5L2. Interacts with host KAT5/Tip60; this interaction targets the latter to degradation. Interacts with the host deacetylase SIRT1. Interacts with host capping enzyme RNGTT; this interaction stimulates RNGTT. Binds to host KDR, and to the host integrins ITGAV/ITGB3 and ITGA5/ITGB1. Interacts with host KPNB1/importin beta-1 without previous binding to KPNA1/importin alpha-1. Interacts with EIF2AK2. Interacts with host nucleosome assembly protein NAP1L1; this interaction may be required for the transport of Tat within the nucleus, since the two proteins interact at the nuclear rim. Interacts with host C1QBP/SF2P32; this interaction involves lysine-acetylated Tat. Interacts with the host chemokine receptors CCR2, CCR3 and CXCR4. Interacts with host DPP4/CD26; this interaction may trigger an anti-proliferative effect. Interacts with host LDLR. Interacts with the host extracellular matrix metalloproteinase MMP1. Interacts with host PRMT6; this interaction mediates Tat's methylation. Interacts with, and is ubiquitinated by MDM2/Hdm2. Interacts with host PSMC3 and HTATIP2. Interacts with STAB1; this interaction may overcome SATB1-mediated repression of IL2 and IL2RA (interleukin) in T cells by binding to the same domain than HDAC1. Interacts (when acetylated) with human CDK13, thereby increasing HIV-1 mRNA splicing and promoting the production of the doubly spliced HIV-1 protein Nef. Interacts with host TBP; this interaction modulates the activity of transcriptional pre-initiation complex. Interacts with host RELA. Interacts with host PLSCR1; this interaction negatively regulates Tat transactivation activity by altering its subcellular distribution. Post-translationally, asymmetrical arginine methylation by host PRMT6 seems to diminish the transactivation capacity of Tat and affects the interaction with host CCNT1. In terms of processing, acetylation by EP300, CREBBP, GCN5L2/GCN5 and PCAF regulates the transactivation activity of Tat. EP300-mediated acetylation of Lys-50 promotes dissociation of Tat from the TAR RNA through the competitive binding to PCAF's bromodomain. In addition, the non-acetylated Tat's N-terminus can also interact with PCAF. PCAF-mediated acetylation of Lys-28 enhances Tat's binding to CCNT1. Lys-50 is deacetylated by SIRT1. Polyubiquitination by host MDM2 does not target Tat to degradation, but activates its transactivation function and fosters interaction with CCNT1 and TAR RNA. Post-translationally, phosphorylated by EIF2AK2 on serine and threonine residues adjacent to the basic region important for TAR RNA binding and function. Phosphorylation of Tat by EIF2AK2 is dependent on the prior activation of EIF2AK2 by dsRNA.

It is found in the host nucleus. The protein resides in the host nucleolus. Its subcellular location is the host cytoplasm. It localises to the secreted. In terms of biological role, transcriptional activator that increases RNA Pol II processivity, thereby increasing the level of full-length viral transcripts. Recognizes a hairpin structure at the 5'-LTR of the nascent viral mRNAs referred to as the transactivation responsive RNA element (TAR) and recruits the cyclin T1-CDK9 complex (P-TEFb complex) that will in turn hyperphosphorylate the RNA polymerase II to allow efficient elongation. The CDK9 component of P-TEFb and other Tat-activated kinases hyperphosphorylate the C-terminus of RNA Pol II that becomes stabilized and much more processive. Other factors such as HTATSF1/Tat-SF1, SUPT5H/SPT5, and HTATIP2 are also important for Tat's function. Besides its effect on RNA Pol II processivity, Tat induces chromatin remodeling of proviral genes by recruiting the histone acetyltransferases (HATs) CREBBP, EP300 and PCAF to the chromatin. This also contributes to the increase in proviral transcription rate, especially when the provirus integrates in transcriptionally silent region of the host genome. To ensure maximal activation of the LTR, Tat mediates nuclear translocation of NF-kappa-B by interacting with host RELA. Through its interaction with host TBP, Tat may also modulate transcription initiation. Tat can reactivate a latently infected cell by penetrating in it and transactivating its LTR promoter. In the cytoplasm, Tat is thought to act as a translational activator of HIV-1 mRNAs. Functionally, extracellular circulating Tat can be endocytosed by surrounding uninfected cells via the binding to several surface receptors such as CD26, CXCR4, heparan sulfate proteoglycans (HSPG) or LDLR. Neurons are rarely infected, but they internalize Tat via their LDLR. Through its interaction with nuclear HATs, Tat is potentially able to control the acetylation-dependent cellular gene expression. Modulates the expression of many cellular genes involved in cell survival, proliferation or in coding for cytokines or cytokine receptors. Tat plays a role in T-cell and neurons apoptosis. Tat induced neurotoxicity and apoptosis probably contribute to neuroAIDS. Circulating Tat also acts as a chemokine-like and/or growth factor-like molecule that binds to specific receptors on the surface of the cells, affecting many cellular pathways. In the vascular system, Tat binds to ITGAV/ITGB3 and ITGA5/ITGB1 integrins dimers at the surface of endothelial cells and competes with bFGF for heparin-binding sites, leading to an excess of soluble bFGF. This is Protein Tat from Human immunodeficiency virus type 1 group M subtype B (isolate SF33) (HIV-1).